The following is a 233-amino-acid chain: Ribonuclease HII (233 aa).

The RNase H type-2 domain occupies 21–211; sequence KIIAGVDEVG…LDALPQWRHL (191 aa). A divalent metal cation-binding residues include aspartate 27, glutamate 28, and aspartate 119.

This sequence belongs to the RNase HII family. It depends on Mn(2+) as a cofactor. Mg(2+) is required as a cofactor.

It localises to the cytoplasm. The catalysed reaction is Endonucleolytic cleavage to 5'-phosphomonoester.. Endonuclease that specifically degrades the RNA of RNA-DNA hybrids. The chain is Ribonuclease HII (rnhB) from Streptomyces coelicolor (strain ATCC BAA-471 / A3(2) / M145).